A 134-amino-acid chain; its full sequence is Profilin-2 (134 aa).

An intrachain disulfide couples cysteine 13 to cysteine 118. Positions 84 to 100 (AVIRGKKGAGGITIKKT) match the Involved in PIP2 interaction motif. Threonine 114 is subject to Phosphothreonine.

Belongs to the profilin family. Occurs in many kinds of cells as a complex with monomeric actin in a 1:1 ratio. Phosphorylated by MAP kinases.

It is found in the cytoplasm. The protein localises to the cytoskeleton. Functionally, binds to actin and affects the structure of the cytoskeleton. At high concentrations, profilin prevents the polymerization of actin, whereas it enhances it at low concentrations. This is Profilin-2 from Olea europaea (Common olive).